The following is a 270-amino-acid chain: Interleukin-1 beta (270 aa).

Residues 1-118 (MATVPEPTSE…VYDDDAFVCD (118 aa)) constitute a propeptide that is removed on maturation.

Belongs to the IL-1 family. As to quaternary structure, monomer. In its precursor form, weakly interacts with full-length MEFV; the mature cytokine does not interact at all. Interacts with integrins ITGAV:ITGBV and ITGA5:ITGB1; integrin-binding is required for IL1B signaling. Interacts with cargo receptor TMED10; the interaction is direct and is required for the secretion of IL1B mature form. Interacts with HSP90AB1; the interaction facilitates cargo translocation into the ERGIC. Interacts with HSP90B1; the interaction facilitates cargo translocation into the ERGIC.

The protein localises to the cytoplasm. It is found in the cytosol. The protein resides in the secreted. Its subcellular location is the lysosome. It localises to the extracellular exosome. In terms of biological role, potent pro-inflammatory cytokine. Initially discovered as the major endogenous pyrogen, induces prostaglandin synthesis, neutrophil influx and activation, T-cell activation and cytokine production, B-cell activation and antibody production, and fibroblast proliferation and collagen production. Promotes Th17 differentiation of T-cells. Synergizes with IL12/interleukin-12 to induce IFNG synthesis from T-helper 1 (Th1) cells. Plays a role in angiogenesis by inducing VEGF production synergistically with TNF and IL6. Involved in transduction of inflammation downstream of pyroptosis: its mature form is specifically released in the extracellular milieu by passing through the gasdermin-D (GSDMD) pore. The sequence is that of Interleukin-1 beta (IL1B) from Phoca vitulina richardii (Pacific harbor seal).